A 168-amino-acid polypeptide reads, in one-letter code: Cytolysin secretion protein (168 aa).

This is Cytolysin secretion protein (vvhB) from Vibrio vulnificus (strain CMCP6).